A 567-amino-acid chain; its full sequence is Frizzled-7 (567 aa).

A signal peptide spans 1–31 (MRPAAGEAGAGLRWLGLAALLAALLGTPCAA). Topologically, residues 32–250 (AHHEDKAISV…EAEVRFARLW (219 aa)) are extracellular. One can recognise an FZ domain in the interval 42–161 (PDHGFCQPIS…HGAGEICVGQ (120 aa)). 5 disulfides stabilise this stretch: cysteine 47–cysteine 108, cysteine 55–cysteine 101, cysteine 92–cysteine 129, cysteine 118–cysteine 158, and cysteine 122–cysteine 146. Asparagine 61 carries an N-linked (GlcNAc...) asparagine glycan. Asparagine 162 carries N-linked (GlcNAc...) asparagine glycosylation. The helical transmembrane segment at 251-271 (VGVWSVLCCASTLFTVLTYLV) threads the bilayer. Residues 272–282 (DMRRFSYPERP) lie on the Cytoplasmic side of the membrane. The helical transmembrane segment at 283–303 (IIFLSGCYFMVAVAYAAGFLL) threads the bilayer. Topologically, residues 304-330 (EERVVCLERFSEDGYRTVAQGTKKEGC) are extracellular. Residues 331-351 (TILFMILYFFGMASSIWWVIL) form a helical membrane-spanning segment. Residues 352–373 (SLTWFLAAGMKWGHEAIEANSQ) lie on the Cytoplasmic side of the membrane. A helical membrane pass occupies residues 374–394 (YFHLAAWAVPAVKTITILAMG). Over 395-417 (QVDGDVLSGVCYVGIYSVDSLRG) the chain is Extracellular. Residues 418–438 (FVLAPLFVYLFIGTSFLLAGF) form a helical membrane-spanning segment. Topologically, residues 439 to 464 (VSLFRIRTIMKHDGTKTEKLEKLMVR) are cytoplasmic. Residues 465-485 (IGVFSVLYTVPATIVVACYFY) traverse the membrane as a helical segment. At 486-521 (EQAFRSTWEKTWLLQTCKTYAVPCPSHFAPMSPDFT) the chain is on the extracellular side. A helical membrane pass occupies residues 522 to 542 (VFMIKYLMTMIVGITTGFWIW). Over 543-567 (SGKTLQSWRRFYHRLSTGSKGETAV) the chain is Cytoplasmic. Residues 545–550 (KTLQSW) carry the Lys-Thr-X-X-X-Trp motif, mediates interaction with the PDZ domain of Dvl family members motif. The short motif at 565–567 (TAV) is the PDZ-binding element.

The protein belongs to the G-protein coupled receptor Fz/Smo family. In terms of tissue distribution, expressed broadly in cranial ectoderm. Also expressed in the developing somites and in other cranial placodes, including the olfactory, lens, otic placodes (lateral half of the vesicle) and epibranchial placodes. Low level of expression in all the mesoderm derivatives in the limb buds.

It is found in the cell membrane. The protein resides in the endosome membrane. Functionally, receptor for Wnt proteins. Most of frizzled receptors are coupled to the beta-catenin canonical signaling pathway, which leads to the activation of disheveled proteins, inhibition of GSK-3 kinase, nuclear accumulation of beta-catenin and activation of Wnt target genes. A second signaling pathway involving PKC and calcium fluxes has been seen for some family members, but it is not yet clear if it represents a distinct pathway or if it can be integrated in the canonical pathway, as PKC seems to be required for Wnt-mediated inactivation of GSK-3 kinase. Both pathways seem to involve interactions with G-proteins. May be involved in transduction and intercellular transmission of polarity information during tissue morphogenesis and/or in differentiated tissues. This chain is Frizzled-7 (FZD7), found in Gallus gallus (Chicken).